The following is a 138-amino-acid chain: ATP synthase epsilon chain (138 aa).

It belongs to the ATPase epsilon chain family. F-type ATPases have 2 components, CF(1) - the catalytic core - and CF(0) - the membrane proton channel. CF(1) has five subunits: alpha(3), beta(3), gamma(1), delta(1), epsilon(1). CF(0) has three main subunits: a, b and c.

The protein resides in the cell membrane. Functionally, produces ATP from ADP in the presence of a proton gradient across the membrane. This is ATP synthase epsilon chain from Streptococcus pyogenes serotype M2 (strain MGAS10270).